A 271-amino-acid polypeptide reads, in one-letter code: Formamidopyrimidine-DNA glycosylase (271 aa).

Pro2 functions as the Schiff-base intermediate with DNA in the catalytic mechanism. Glu3 functions as the Proton donor in the catalytic mechanism. Lys58 serves as the catalytic Proton donor; for beta-elimination activity. Residues His92, Arg111, and Arg152 each coordinate DNA. Residues 237–271 form an FPG-type zinc finger; it reads MVYGREGEACRHCGGELKHATIGQRATVWCAACQR. The Proton donor; for delta-elimination activity role is filled by Arg261.

The protein belongs to the FPG family. As to quaternary structure, monomer. Requires Zn(2+) as cofactor.

The enzyme catalyses Hydrolysis of DNA containing ring-opened 7-methylguanine residues, releasing 2,6-diamino-4-hydroxy-5-(N-methyl)formamidopyrimidine.. It carries out the reaction 2'-deoxyribonucleotide-(2'-deoxyribose 5'-phosphate)-2'-deoxyribonucleotide-DNA = a 3'-end 2'-deoxyribonucleotide-(2,3-dehydro-2,3-deoxyribose 5'-phosphate)-DNA + a 5'-end 5'-phospho-2'-deoxyribonucleoside-DNA + H(+). Functionally, involved in base excision repair of DNA damaged by oxidation or by mutagenic agents. Acts as a DNA glycosylase that recognizes and removes damaged bases. Has a preference for oxidized purines, such as 7,8-dihydro-8-oxoguanine (8-oxoG). Has AP (apurinic/apyrimidinic) lyase activity and introduces nicks in the DNA strand. Cleaves the DNA backbone by beta-delta elimination to generate a single-strand break at the site of the removed base with both 3'- and 5'-phosphates. The sequence is that of Formamidopyrimidine-DNA glycosylase from Xanthomonas campestris pv. campestris (strain ATCC 33913 / DSM 3586 / NCPPB 528 / LMG 568 / P 25).